Reading from the N-terminus, the 314-residue chain is Ketimine reductase mu-crystallin (314 aa).

Arg-47 is a binding site for 3,3',5-triiodo-L-thyronine. NADPH-binding residues include Asp-82, His-92, Arg-119, Ala-144, Val-146, Gln-147, Asn-168, Arg-169, Thr-170, Asn-173, Thr-205, Leu-206, Val-226, and Ala-228. A 3,3',5-triiodo-L-thyronine-binding site is contributed by Glu-257. NADPH is bound at residue Ser-292.

The protein belongs to the ornithine cyclodeaminase/mu-crystallin family. As to quaternary structure, homodimer. Binds the thyroid hormone triiodothyronine (T3); T3 binding inhibits enzymatic activity. Expressed in neural tissues, muscle and kidney. Expressed in the inner ear.

The protein resides in the cytoplasm. It carries out the reaction L-pipecolate + NADP(+) = Delta(1)-piperideine-2-carboxylate + NADPH + H(+). The catalysed reaction is L-pipecolate + NAD(+) = Delta(1)-piperideine-2-carboxylate + NADH + H(+). The enzyme catalyses L-proline + NADP(+) = 1-pyrroline-2-carboxylate + NADPH + H(+). It catalyses the reaction L-proline + NAD(+) = 1-pyrroline-2-carboxylate + NADH + H(+). It carries out the reaction (3R)-1,4-thiomorpholine-3-carboxylate + NAD(+) = 3,4-dehydrothiomorpholine-3-carboxylate + NADH + 2 H(+). The catalysed reaction is (3R)-1,4-thiomorpholine-3-carboxylate + NADP(+) = 3,4-dehydrothiomorpholine-3-carboxylate + NADPH + 2 H(+). The enzyme catalyses (S)-cystathionine ketimine + NADH + 2 H(+) = (3R,5S)-2,3,5,6,7-pentahydro-1,4-thiazepine-3,5-dicarboxylate + NAD(+). It catalyses the reaction (S)-cystathionine ketimine + NADPH + 2 H(+) = (3R,5S)-2,3,5,6,7-pentahydro-1,4-thiazepine-3,5-dicarboxylate + NADP(+). It carries out the reaction (R)-lanthionine ketimine + NADPH + 2 H(+) = (3R,5R)-1,4-thiomorpholine-3,5-dicarboxylate + NADP(+). The catalysed reaction is Delta(2)-thiazoline-2-carboxylate + NADPH + 2 H(+) = L-thiazolidine-2-carboxylate + NADP(+). Its activity is regulated as follows. Inhibited by thyroid hormones triiodothyronine (T3) and thyroxine (T4). Its function is as follows. Catalyzes the NAD(P)H-dependent reduction of imine double bonds of a number of cyclic ketimine substrates, including sulfur-containing cyclic ketimines. Under physiological conditions, it efficiently catalyzes delta(1)-piperideine-2-carboxylate (P2C) and delta(1)-pyrroline-2-carboxylate (Pyr2C) reduction, suggesting a central role in lysine and glutamate metabolism. Additional substrates are delta(2)-thiazoline-2-carboxylate (T2C), 3,4-dehydrothiomorpholine-3-carboxylate (AECK), and (R)-lanthionine ketimine (LK) that is reduced at very low rate compared to other substrates. Also catalyzes the NAD(P)H-dependent reduction of (S)-cystathionine ketimine (CysK). The chain is Ketimine reductase mu-crystallin from Homo sapiens (Human).